The following is a 362-amino-acid chain: Red-sensitive opsin (362 aa).

Residues 1–49 are Extracellular-facing; the sequence is MAAWEAAFAARRRHEEEDTTRDSVFTYTNSNNTRGPFEGPNYHIAPRWV. A glycan (N-linked (GlcNAc...) asparagine) is linked at Asn-31. A helical transmembrane segment spans residues 50-74; the sequence is YNLTSVWMIFVVAASVFTNGLVLVA. Topologically, residues 75–86 are cytoplasmic; the sequence is TWKFKKLRHPLN. A helical transmembrane segment spans residues 87-112; sequence WILVNLAVADLGETVIASTISVINQI. The Extracellular portion of the chain corresponds to 113-126; that stretch reads SGYFILGHPMCVVE. A disulfide bridge connects residues Cys-123 and Cys-200. A helical membrane pass occupies residues 127–146; the sequence is GYTVSACGITALWSLAIISW. Over 147–165 the chain is Cytoplasmic; it reads ERWFVVCKPFGNIKFDGKL. A helical transmembrane segment spans residues 166–189; the sequence is AVAGILFSWLWSCAWTAPPIFGWS. Topologically, residues 190-215 are extracellular; that stretch reads RYWPHGLKTSCGPDVFSGSSDPGVQS. The chain crosses the membrane as a helical span at residues 216–243; that stretch reads YMVVLMVTCCFFPLAIIILCYLQVWLAI. Over 244-265 the chain is Cytoplasmic; that stretch reads RAVAAQQKESESTQKAEKEVSR. A helical membrane pass occupies residues 266–289; that stretch reads MVVVMIVAYCFCWGPYTFFACFAA. Residues 290–297 lie on the Extracellular side of the membrane; the sequence is ANPGYAFH. The chain crosses the membrane as a helical span at residues 298-322; that stretch reads PLAAALPAYFAKSATIYNPIIYVFM. Residue Lys-309 is modified to N6-(retinylidene)lysine. The Cytoplasmic segment spans residues 323–362; the sequence is NRQFRNCILQLFGKKVDDGSEVSTSRTEVSSVSNSSVSPA.

It belongs to the G-protein coupled receptor 1 family. Opsin subfamily. Post-translationally, phosphorylated on some or all of the serine and threonine residues present in the C-terminal region. As to expression, the color pigments are found in the cone photoreceptor cells.

It is found in the membrane. Its function is as follows. Visual pigments are the light-absorbing molecules that mediate vision. They consist of an apoprotein, opsin, covalently linked to cis-retinal. The chain is Red-sensitive opsin from Gallus gallus (Chicken).